A 327-amino-acid polypeptide reads, in one-letter code: Zinc transport protein ZntB (327 aa).

The Cytoplasmic portion of the chain corresponds to 1–273 (MEAIKGSDVN…ARRTYTMSLM (273 aa)). A helical transmembrane segment spans residues 274-294 (AMVFLPSTFLTGLFGVNLGGI). Residues 295-300 (PGGGWR) are Periplasmic-facing. A helical transmembrane segment spans residues 301–321 (FGFSLFCILLVVLIGGVTLWL). At 322-327 (HRSKWL) the chain is on the cytoplasmic side.

It belongs to the CorA metal ion transporter (MIT) (TC 1.A.35) family.

It is found in the cell inner membrane. It catalyses the reaction Zn(2+)(out) + H(+)(out) = Zn(2+)(in) + H(+)(in). Zinc transporter. Acts as a Zn(2+):proton symporter, which likely mediates zinc ion uptake. This is Zinc transport protein ZntB from Salmonella agona (strain SL483).